The primary structure comprises 139 residues: Holo-[acyl-carrier-protein] synthase (139 aa).

2 residues coordinate Mg(2+): aspartate 8 and glutamate 57.

The protein belongs to the P-Pant transferase superfamily. AcpS family. Mg(2+) serves as cofactor.

The protein localises to the cytoplasm. It carries out the reaction apo-[ACP] + CoA = holo-[ACP] + adenosine 3',5'-bisphosphate + H(+). In terms of biological role, transfers the 4'-phosphopantetheine moiety from coenzyme A to a Ser of acyl-carrier-protein. The chain is Holo-[acyl-carrier-protein] synthase from Sinorhizobium fredii (strain NBRC 101917 / NGR234).